A 162-amino-acid polypeptide reads, in one-letter code: MRCPFCQFEGLKVTDSRDAMEMNAIRRRRECLNCLKRFTTFETIELTVQVQKRDGTYEDFQQHKLINGLAAACRHTKISHDQVISLAAQMTNELMQSQIQQISTTQLGEMAMKHLQSLDPIAYIRFACVYKRFKDLGELEEAIKTIQSKDEDKSCSILKDLL.

A zinc finger spans residues 3–34 (CPFCQFEGLKVTDSRDAMEMNAIRRRRECLNC). The region spanning 48–138 (VQVQKRDGTY…VYKRFKDLGE (91 aa)) is the ATP-cone domain.

This sequence belongs to the NrdR family. Requires Zn(2+) as cofactor.

In terms of biological role, negatively regulates transcription of bacterial ribonucleotide reductase nrd genes and operons by binding to NrdR-boxes. This is Transcriptional repressor NrdR from Protochlamydia amoebophila (strain UWE25).